Here is a 96-residue protein sequence, read N- to C-terminus: Protein Vpr (96 aa).

Residues 1–42 form a homooligomerization region; that stretch reads MEQAPEDQGPQREPNNEWTLEILEELKREAVRHFPRPWLHNL. A phosphoserine; by host mark is found at Ser79, Ser94, and Ser96.

Belongs to the HIV-1 VPR protein family. In terms of assembly, homooligomer, may form homodimer. Interacts with p6-gag region of the Pr55 Gag precursor protein through a (Leu-X-X)4 motif near the C-terminus of the P6gag protein. Interacts with host UNG. May interact with host RAD23A/HHR23A. Interacts with host VPRBP/DCAF1, leading to hijack the CUL4A-RBX1-DDB1-DCAF1/VPRBP complex, mediating ubiquitination of host proteins such as TERT and ZGPAT and arrest of the cell cycle in G2 phase. In terms of processing, phosphorylated on several residues by host. These phosphorylations regulate VPR activity for the nuclear import of the HIV-1 pre-integration complex.

Its subcellular location is the virion. It is found in the host nucleus. The protein localises to the host extracellular space. In terms of biological role, during virus replication, may deplete host UNG protein, and incude G2-M cell cycle arrest. Acts by targeting specific host proteins for degradation by the 26S proteasome, through association with the cellular CUL4A-DDB1 E3 ligase complex by direct interaction with host VPRPB/DCAF-1. Cell cycle arrest reportedly occurs within hours of infection and is not blocked by antiviral agents, suggesting that it is initiated by the VPR carried into the virion. Additionally, VPR induces apoptosis in a cell cycle dependent manner suggesting that these two effects are mechanistically linked. Detected in the serum and cerebrospinal fluid of AIDS patient, VPR may also induce cell death to bystander cells. Its function is as follows. During virus entry, plays a role in the transport of the viral pre-integration (PIC) complex to the host nucleus. This function is crucial for viral infection of non-dividing macrophages. May act directly at the nuclear pore complex, by binding nucleoporins phenylalanine-glycine (FG)-repeat regions. The protein is Protein Vpr of Human immunodeficiency virus type 1 group M subtype K (isolate 96CM-MP535) (HIV-1).